The chain runs to 686 residues: Methionine--tRNA ligase (686 aa).

The short motif at 15–25 (PYANGSIHLGH) is the 'HIGH' region element. Residues Cys146, Cys149, Cys159, and Cys162 each contribute to the Zn(2+) site. A 'KMSKS' region motif is present at residues 332–336 (KMSKS). Lys335 serves as a coordination point for ATP. A tRNA-binding domain is found at 585–686 (AFAAVDMRIA…EGAQPGMRVM (102 aa)).

Belongs to the class-I aminoacyl-tRNA synthetase family. MetG type 1 subfamily. As to quaternary structure, homodimer. The cofactor is Zn(2+).

The protein resides in the cytoplasm. The enzyme catalyses tRNA(Met) + L-methionine + ATP = L-methionyl-tRNA(Met) + AMP + diphosphate. Functionally, is required not only for elongation of protein synthesis but also for the initiation of all mRNA translation through initiator tRNA(fMet) aminoacylation. The polypeptide is Methionine--tRNA ligase (Vibrio campbellii (strain ATCC BAA-1116)).